Consider the following 131-residue polypeptide: Snaclec coagulation factor IX/factor X-binding protein subunit A (131 aa).

The C-type lectin domain maps to 1 to 131; the sequence is DCLPGWSSHE…EEPQRFTCEI (131 aa). 3 cysteine pairs are disulfide-bonded: C2/C13, C30/C129, and C104/C121. Residues S41, E43, and E47 each contribute to the Ca(2+) site. Residue E130 coordinates Ca(2+).

It belongs to the snaclec family. Heterodimer of subunits A and B; disulfide-linked. As to expression, expressed by the venom gland.

The protein resides in the secreted. In terms of biological role, anticoagulant protein which binds to coagulation factor IX (F9) and coagulation factor X (F10) in the presence of calcium. It may bind the gamma-carboxyglutamic acid-domain regions of factors with a 1 to 1 stoichiometry. The dissociation constant (K(d)) are 6.6 nM for factor IX (F9) and 125 nM for factor X (F10). Does not bind carbohydrates. The polypeptide is Snaclec coagulation factor IX/factor X-binding protein subunit A (Echis carinatus (Saw-scaled viper)).